A 237-amino-acid polypeptide reads, in one-letter code: tRNA (guanine-N(7)-)-methyltransferase (237 aa).

Glu-68, Glu-93, Asp-120, and Asp-143 together coordinate S-adenosyl-L-methionine. Asp-143 is an active-site residue. Substrate-binding positions include Lys-147, Asp-179, and 216-219 (TKFE).

This sequence belongs to the class I-like SAM-binding methyltransferase superfamily. TrmB family.

It catalyses the reaction guanosine(46) in tRNA + S-adenosyl-L-methionine = N(7)-methylguanosine(46) in tRNA + S-adenosyl-L-homocysteine. The protein operates within tRNA modification; N(7)-methylguanine-tRNA biosynthesis. Its function is as follows. Catalyzes the formation of N(7)-methylguanine at position 46 (m7G46) in tRNA. The protein is tRNA (guanine-N(7)-)-methyltransferase of Shewanella halifaxensis (strain HAW-EB4).